We begin with the raw amino-acid sequence, 74 residues long: Capsid protein VP2 (74 aa).

Its subcellular location is the virion. In terms of biological role, this extremely basic protein may tightly bind to SSV1 DNA. Essential for virus function. The sequence is that of Capsid protein VP2 (VP2) from Saccharolobus solfataricus (Sulfolobus solfataricus).